The sequence spans 442 residues: uncharacterized protein (442 aa).

Residues 1–238 (MKAEGLSGGY…QSIKAVYDTD (238 aa)) enclose the ABC transporter domain. 33-40 (GPNGSGKT) serves as a coordination point for ATP.

This sequence belongs to the ABC transporter superfamily. In terms of assembly, the complex is composed of two ATP-binding proteins (YvrA), two transmembrane proteins (YvrB) and a solute-binding protein (YvrC).

Functionally, probably part of an ABC transporter complex. Probably responsible for energy coupling to the transport system. This is an uncharacterized protein from Bacillus subtilis (strain 168).